The primary structure comprises 1615 residues: ABC transporter A family member 4 (1615 aa).

Transmembrane regions (helical) follow at residues 30–50 (ILLP…SMII), 233–253 (GVFI…NIVI), 278–298 (SIIS…ILSA), 308–328 (ITLI…AFIL), 337–357 (YAGL…IIIG), 365–385 (LKLL…YVWC), and 405–425 (YEII…LWYL). In terms of domain architecture, ABC transmembrane type-2 spans 182 to 383 (TQIQTGVDQA…PIAISVANYV (202 aa)). The ABC transporter 1 domain maps to 492–727 (ISIRNLRKEF…FGVGYLLTIS (236 aa)). 528–535 (GPNGSGKS) is a binding site for ATP. 7 helical membrane passes run 855 to 875 (IKSF…GLIL), 1022 to 1042 (FVAI…IAAS), 1075 to 1095 (IWDY…IIAV), 1106 to 1126 (YISG…LMSF), 1135 to 1155 (VGAI…ISFI), 1174 to 1194 (IIEY…ILAI), and 1218 to 1238 (LLPN…ILLI). The 236-residue stretch at 1293–1528 (IIFNNLYKKF…FGSGYSIEVK (236 aa)) folds into the ABC transporter 2 domain. Residue 1331 to 1338 (GLNGCGKS) participates in ATP binding.

The protein belongs to the ABC transporter superfamily. ABCA family.

The protein localises to the membrane. In Dictyostelium discoideum (Social amoeba), this protein is ABC transporter A family member 4 (abcA4).